We begin with the raw amino-acid sequence, 488 residues long: Rhamnulokinase (488 aa).

Position 13-17 (13-17) interacts with ATP; it reads ASSGR. Cys68 and Cys222 are disulfide-bonded. Substrate-binding positions include Gly83 and 236-238; that span reads HDT. Residue Asp237 is the Proton acceptor of the active site. Position 259 (Thr259) interacts with ATP. Asn296 serves as a coordination point for substrate. ATP is bound at residue Gln304. A disulfide bridge links Cys353 with Cys370. Gly402 provides a ligand contact to ATP. An intrachain disulfide couples Cys413 to Cys417.

It belongs to the rhamnulokinase family. It depends on Mg(2+) as a cofactor.

The enzyme catalyses L-rhamnulose + ATP = L-rhamnulose 1-phosphate + ADP + H(+). Its pathway is carbohydrate degradation; L-rhamnose degradation; glycerone phosphate from L-rhamnose: step 2/3. Functionally, involved in the catabolism of L-rhamnose (6-deoxy-L-mannose). Catalyzes the transfer of the gamma-phosphate group from ATP to the 1-hydroxyl group of L-rhamnulose to yield L-rhamnulose 1-phosphate. This Klebsiella pneumoniae subsp. pneumoniae (strain ATCC 700721 / MGH 78578) protein is Rhamnulokinase.